The sequence spans 341 residues: tRNA N6-adenosine threonylcarbamoyltransferase (341 aa).

Positions 111 and 115 each coordinate Fe cation. Substrate contacts are provided by residues 133-137 (VVSGG), Asp-166, Gly-179, Asp-183, and Asn-271. Asp-299 is a Fe cation binding site.

This sequence belongs to the KAE1 / TsaD family. Requires Fe(2+) as cofactor.

The protein resides in the cytoplasm. The enzyme catalyses L-threonylcarbamoyladenylate + adenosine(37) in tRNA = N(6)-L-threonylcarbamoyladenosine(37) in tRNA + AMP + H(+). Required for the formation of a threonylcarbamoyl group on adenosine at position 37 (t(6)A37) in tRNAs that read codons beginning with adenine. Is involved in the transfer of the threonylcarbamoyl moiety of threonylcarbamoyl-AMP (TC-AMP) to the N6 group of A37, together with TsaE and TsaB. TsaD likely plays a direct catalytic role in this reaction. This chain is tRNA N6-adenosine threonylcarbamoyltransferase, found in Fusobacterium nucleatum subsp. nucleatum (strain ATCC 25586 / DSM 15643 / BCRC 10681 / CIP 101130 / JCM 8532 / KCTC 2640 / LMG 13131 / VPI 4355).